The sequence spans 210 residues: Thymidylate kinase (210 aa).

An ATP-binding site is contributed by 10–17 (GLEGAGKS).

This sequence belongs to the thymidylate kinase family.

The enzyme catalyses dTMP + ATP = dTDP + ADP. In terms of biological role, phosphorylation of dTMP to form dTDP in both de novo and salvage pathways of dTTP synthesis. The protein is Thymidylate kinase of Haemophilus influenzae (strain PittGG).